A 351-amino-acid chain; its full sequence is Transmembrane protein DDB_G0272716 (351 aa).

Asn-4 and Asn-59 each carry an N-linked (GlcNAc...) asparagine glycan. Transmembrane regions (helical) follow at residues 175–195 (FSSLFGVISGFLGIGSVTAIG) and 215–235 (VVAPICAPVLLTFGCLVGAFI). N-linked (GlcNAc...) asparagine glycosylation occurs at Asn-345.

It is found in the membrane. This chain is Transmembrane protein DDB_G0272716, found in Dictyostelium discoideum (Social amoeba).